An 81-amino-acid chain; its full sequence is Acyl carrier protein (81 aa).

One can recognise a Carrier domain in the interval 4–79; that stretch reads DEVYSRVRKI…DAVNYILSKK (76 aa). Ser39 carries the O-(pantetheine 4'-phosphoryl)serine modification.

The protein belongs to the acyl carrier protein (ACP) family. 4'-phosphopantetheine is transferred from CoA to a specific serine of apo-ACP by AcpS. This modification is essential for activity because fatty acids are bound in thioester linkage to the sulfhydryl of the prosthetic group.

Its subcellular location is the cytoplasm. The protein operates within lipid metabolism; fatty acid biosynthesis. Functionally, carrier of the growing fatty acid chain in fatty acid biosynthesis. The sequence is that of Acyl carrier protein from Synechococcus sp. (strain JA-3-3Ab) (Cyanobacteria bacterium Yellowstone A-Prime).